A 234-amino-acid chain; its full sequence is Large ribosomal subunit protein uL1 (234 aa).

It belongs to the universal ribosomal protein uL1 family. As to quaternary structure, part of the 50S ribosomal subunit.

In terms of biological role, binds directly to 23S rRNA. The L1 stalk is quite mobile in the ribosome, and is involved in E site tRNA release. Its function is as follows. Protein L1 is also a translational repressor protein, it controls the translation of the L11 operon by binding to its mRNA. In Pseudoalteromonas translucida (strain TAC 125), this protein is Large ribosomal subunit protein uL1.